Here is a 490-residue protein sequence, read N- to C-terminus: Cardiolipin synthase 1 (490 aa).

2 helical membrane-spanning segments follow: residues 9–29 (ILTI…FVII) and 42–62 (WAWL…YLFL). PLD phosphodiesterase domains follow at residues 225–252 (MNNR…GDDY) and 403–430 (QNGF…DFRS). Catalysis depends on residues H230, K232, D237, H408, K410, and D415.

This sequence belongs to the phospholipase D family. Cardiolipin synthase subfamily.

The protein localises to the cell membrane. It catalyses the reaction 2 a 1,2-diacyl-sn-glycero-3-phospho-(1'-sn-glycerol) = a cardiolipin + glycerol. Its function is as follows. Catalyzes the reversible phosphatidyl group transfer from one phosphatidylglycerol molecule to another to form cardiolipin (CL) (diphosphatidylglycerol) and glycerol. The chain is Cardiolipin synthase 1 (cls1) from Staphylococcus epidermidis (strain ATCC 35984 / DSM 28319 / BCRC 17069 / CCUG 31568 / BM 3577 / RP62A).